The sequence spans 169 residues: Putative glycine cleavage system H protein, mitochondrial (169 aa).

Residues 60–142 enclose the Lipoyl-binding domain; sequence VGTVGITSYA…EEEGWICKIK (83 aa). Residue Lys-101 is modified to N6-lipoyllysine. Position 131 is a phosphoserine (Ser-131).

The protein belongs to the GcvH family. Component of the glycine decarboxylase complex (GDC), which is composed of four proteins: P, T, L and H. (R)-lipoate serves as cofactor.

The protein localises to the mitochondrion. Its function is as follows. The glycine cleavage system (glycine decarboxylase complex) catalyzes the degradation of glycine. The H protein shuttles the methylamine group of glycine from the P protein to the T protein. The sequence is that of Putative glycine cleavage system H protein, mitochondrial (gcv3) from Schizosaccharomyces pombe (strain 972 / ATCC 24843) (Fission yeast).